The chain runs to 64 residues: MSYKCQLCGKGSVTGGSYSHSHRNTKRTFRPNLQKQKVVLEGKTQTAYVCTKCIKSGFTTKPVK.

The protein belongs to the bacterial ribosomal protein bL28 family.

The sequence is that of Large ribosomal subunit protein bL28 from Elusimicrobium minutum (strain Pei191).